The following is a 226-amino-acid chain: LexA repressor (226 aa).

The H-T-H motif DNA-binding region spans 42–62; that stretch reads MREIGDAVGLASLSSVTHQLN. Residues Ser150 and Lys187 each act as for autocatalytic cleavage activity in the active site.

Belongs to the peptidase S24 family. In terms of assembly, homodimer.

The enzyme catalyses Hydrolysis of Ala-|-Gly bond in repressor LexA.. Represses a number of genes involved in the response to DNA damage (SOS response), including recA and lexA. In the presence of single-stranded DNA, RecA interacts with LexA causing an autocatalytic cleavage which disrupts the DNA-binding part of LexA, leading to derepression of the SOS regulon and eventually DNA repair. The sequence is that of LexA repressor from Clavibacter sepedonicus (Clavibacter michiganensis subsp. sepedonicus).